The following is a 141-amino-acid chain: Hemoglobin subunit alpha-A (141 aa).

The 141-residue stretch at 1–141 folds into the Globin domain; it reads VLSPADKSNV…VGTVLTAKYR (141 aa). An O2-binding site is contributed by H58. H87 provides a ligand contact to heme b.

It belongs to the globin family. In terms of assembly, heterotetramer of two alpha chains and two beta chains. Red blood cells.

In terms of biological role, involved in oxygen transport from the lung to the various peripheral tissues. In Passer montanus (Eurasian tree sparrow), this protein is Hemoglobin subunit alpha-A (HBAA).